Here is a 391-residue protein sequence, read N- to C-terminus: MKKRVIIHVDMDAFFAAVEQRDNPELKGKPVIVGGVPGERGVVAAASYEARKFGVRSAMSLWEAARLCPHGIFIPGNHKKYQEVSEKIFRIFREYTPLVEPVSLDEAYLDVTGSQKLFGPGAEIGKKIKKRIFEETELTASVGVAPNKFLAKLASEVNKPDGFCEVREDNVLDFLAPLPVEMLWGVGEKMKERLNDMGIKTVQDFWELPEFFLRKKFGVLGQNLYYLSRGIDFREVIPERVPKSLGKEITLQKDSSDVDYLLGKLLGLTMAVGRGLRREGFYAGGISVKIRLSSFITYTRHSRFFEPTWMDDVLYREAKRLFLENYHGELPVRLVGVTATPLVPVGGGRQISLFGEDLRRENLYPIIDRLNHKYGNKTVTRAKILKISGRG.

A UmuC domain is found at 6-187 (IIHVDMDAFF…LPVEMLWGVG (182 aa)). Residues D10 and D105 each contribute to the Mg(2+) site. E106 is an active-site residue.

The protein belongs to the DNA polymerase type-Y family. In terms of assembly, monomer. Requires Mg(2+) as cofactor.

It is found in the cytoplasm. It catalyses the reaction DNA(n) + a 2'-deoxyribonucleoside 5'-triphosphate = DNA(n+1) + diphosphate. Functionally, poorly processive, error-prone DNA polymerase involved in untargeted mutagenesis. Copies undamaged DNA at stalled replication forks, which arise in vivo from mismatched or misaligned primer ends. These misaligned primers can be extended by PolIV. Exhibits no 3'-5' exonuclease (proofreading) activity. May be involved in translesional synthesis, in conjunction with the beta clamp from PolIII. This chain is DNA polymerase IV, found in Carboxydothermus hydrogenoformans (strain ATCC BAA-161 / DSM 6008 / Z-2901).